The primary structure comprises 206 residues: RNA pyrophosphohydrolase (206 aa).

Positions 6–150 (GYRPNVGIVI…KRDVYRKVMK (145 aa)) constitute a Nudix hydrolase domain. The Nudix box signature appears at 38–59 (GGINEGENIETAMYRELYEEVG). A compositionally biased stretch (basic and acidic residues) spans 162 to 191 (KPETVEKPRVERTEKRDFQKRDNQKREFRK). A disordered region spans residues 162–206 (KPETVEKPRVERTEKRDFQKRDNQKREFRKSARTWNNSHQKGKAQ).

It belongs to the Nudix hydrolase family. RppH subfamily. A divalent metal cation is required as a cofactor.

Accelerates the degradation of transcripts by removing pyrophosphate from the 5'-end of triphosphorylated RNA, leading to a more labile monophosphorylated state that can stimulate subsequent ribonuclease cleavage. This chain is RNA pyrophosphohydrolase, found in Actinobacillus pleuropneumoniae serotype 3 (strain JL03).